Consider the following 424-residue polypeptide: Serine--tRNA ligase (424 aa).

233 to 235 (TAE) contributes to the L-serine binding site. ATP-binding positions include 264-266 (RRE) and V280. E287 contributes to the L-serine binding site. 351-354 (EISS) contributes to the ATP binding site. Position 386 (S386) interacts with L-serine.

Belongs to the class-II aminoacyl-tRNA synthetase family. Type-1 seryl-tRNA synthetase subfamily. Homodimer. The tRNA molecule binds across the dimer.

Its subcellular location is the cytoplasm. It carries out the reaction tRNA(Ser) + L-serine + ATP = L-seryl-tRNA(Ser) + AMP + diphosphate + H(+). It catalyses the reaction tRNA(Sec) + L-serine + ATP = L-seryl-tRNA(Sec) + AMP + diphosphate + H(+). It participates in aminoacyl-tRNA biosynthesis; selenocysteinyl-tRNA(Sec) biosynthesis; L-seryl-tRNA(Sec) from L-serine and tRNA(Sec): step 1/1. Its function is as follows. Catalyzes the attachment of serine to tRNA(Ser). Is also able to aminoacylate tRNA(Sec) with serine, to form the misacylated tRNA L-seryl-tRNA(Sec), which will be further converted into selenocysteinyl-tRNA(Sec). This is Serine--tRNA ligase from Kosmotoga olearia (strain ATCC BAA-1733 / DSM 21960 / TBF 19.5.1).